The following is a 94-amino-acid chain: DNA-directed RNA polymerase subunit omega (94 aa).

This sequence belongs to the RNA polymerase subunit omega family. In terms of assembly, consists of a sigma factor and the RNAP core enzyme which is composed of 2 alpha chains, 1 beta chain, 1 beta' chain and 1 subunit omega.

It carries out the reaction RNA(n) + a ribonucleoside 5'-triphosphate = RNA(n+1) + diphosphate. Its function is as follows. Promotes RNA polymerase assembly. Latches the N- and C-terminal regions of the beta' subunit thereby facilitating its interaction with the beta and alpha subunits. The sequence is that of DNA-directed RNA polymerase subunit omega from Shewanella violacea (strain JCM 10179 / CIP 106290 / LMG 19151 / DSS12).